The primary structure comprises 325 residues: Beta-ketoacyl-[acyl-carrier-protein] synthase III (325 aa).

Residues Cys-112 and His-250 contribute to the active site. The tract at residues 251-255 is ACP-binding; the sequence is QANSR. The active site involves Asn-280.

The protein belongs to the thiolase-like superfamily. FabH family. As to quaternary structure, homodimer.

The protein localises to the cytoplasm. It carries out the reaction malonyl-[ACP] + acetyl-CoA + H(+) = 3-oxobutanoyl-[ACP] + CO2 + CoA. It participates in lipid metabolism; fatty acid biosynthesis. Catalyzes the condensation reaction of fatty acid synthesis by the addition to an acyl acceptor of two carbons from malonyl-ACP. Catalyzes the first condensation reaction which initiates fatty acid synthesis and may therefore play a role in governing the total rate of fatty acid production. Possesses both acetoacetyl-ACP synthase and acetyl transacylase activities. Its substrate specificity determines the biosynthesis of branched-chain and/or straight-chain of fatty acids. The protein is Beta-ketoacyl-[acyl-carrier-protein] synthase III of Lactococcus lactis subsp. cremoris (strain SK11).